The chain runs to 155 residues: Ribonuclease H (155 aa).

The RNase H type-1 domain maps to 5–146; that stretch reads LAEVVEIFTD…ADMLANRGVQ (142 aa). Mg(2+)-binding residues include D14, E52, D74, and D138.

The protein belongs to the RNase H family. Monomer. Mg(2+) serves as cofactor.

The protein resides in the cytoplasm. It catalyses the reaction Endonucleolytic cleavage to 5'-phosphomonoester.. In terms of biological role, endonuclease that specifically degrades the RNA of RNA-DNA hybrids. The protein is Ribonuclease H of Nitrosospira multiformis (strain ATCC 25196 / NCIMB 11849 / C 71).